Here is a 443-residue protein sequence, read N- to C-terminus: Probable D-serine dehydratase (443 aa).

N6-(pyridoxal phosphate)lysine is present on lysine 118.

The protein belongs to the serine/threonine dehydratase family. DsdA subfamily. Pyridoxal 5'-phosphate serves as cofactor.

The enzyme catalyses D-serine = pyruvate + NH4(+). This Vibrio parahaemolyticus serotype O3:K6 (strain RIMD 2210633) protein is Probable D-serine dehydratase.